A 61-amino-acid polypeptide reads, in one-letter code: Copper metallothionein 1-1 (61 aa).

The propeptide occupies 1–8 (MFSELINF). Residues Cys15, Cys17, Cys19, Cys22, and Cys28 each contribute to the Cu cation site. Lys30 is covalently cross-linked (Glycyl lysine isopeptide (Lys-Gly) (interchain with G-Cter in ubiquitin)). Residues Cys32, Cys34, Cys38, Cys44, and Cys46 each contribute to the Cu cation site. The segment at 37-61 (GCNSDDKCPCGNKSEETKKSCCSGK) is disordered. Positions 40–55 (SDDKCPCGNKSEETKK) are enriched in basic and acidic residues.

This sequence belongs to the metallothionein superfamily. Type 12 family.

In terms of biological role, protects the cell against copper toxicity by tightly chelating copper ions. May also act as a depository for copper designated for the effective transfer into the apo forms of copper proteins. This is Copper metallothionein 1-1 (CUP1-1) from Saccharomyces cerevisiae (strain ATCC 204508 / S288c) (Baker's yeast).